The sequence spans 718 residues: Polyribonucleotide nucleotidyltransferase (718 aa).

2 residues coordinate Mg(2+): D493 and D499. Positions 560 to 619 (PRVIKKQIDPDKIRNVIGPGGKMINKIIDETGVKIDIEPDGLIYISSSDAEQAEQAIKAI) constitute a KH domain. The S1 motif domain occupies 629 to 697 (GEVYLGKVVR…ERGRINLSRK (69 aa)). The disordered stretch occupies residues 695 to 718 (SRKQALGEEDGKTNNDDKKSTKKT). Over residues 699–718 (ALGEEDGKTNNDDKKSTKKT) the composition is skewed to basic and acidic residues.

It belongs to the polyribonucleotide nucleotidyltransferase family. The cofactor is Mg(2+).

It is found in the cytoplasm. The enzyme catalyses RNA(n+1) + phosphate = RNA(n) + a ribonucleoside 5'-diphosphate. In terms of biological role, involved in mRNA degradation. Catalyzes the phosphorolysis of single-stranded polyribonucleotides processively in the 3'- to 5'-direction. This is Polyribonucleotide nucleotidyltransferase from Natranaerobius thermophilus (strain ATCC BAA-1301 / DSM 18059 / JW/NM-WN-LF).